The primary structure comprises 147 residues: Myoglobin (147 aa).

One can recognise a Globin domain in the interval alanine 2–lysine 141. Position 60 (histidine 60) interacts with nitrite. Histidine 60 contributes to the O2 binding site. Histidine 89 is a heme b binding site.

This sequence belongs to the globin family. As to quaternary structure, monomeric.

Its subcellular location is the cytoplasm. It is found in the sarcoplasm. The enzyme catalyses Fe(III)-heme b-[protein] + nitric oxide + H2O = Fe(II)-heme b-[protein] + nitrite + 2 H(+). The catalysed reaction is H2O2 + AH2 = A + 2 H2O. Its function is as follows. Monomeric heme protein which primary function is to store oxygen and facilitate its diffusion within muscle tissues. Reversibly binds oxygen through a pentacoordinated heme iron and enables its timely and efficient release as needed during periods of heightened demand. Depending on the oxidative conditions of tissues and cells, and in addition to its ability to bind oxygen, it also has a nitrite reductase activity whereby it regulates the production of bioactive nitric oxide. Under stress conditions, like hypoxia and anoxia, it also protects cells against reactive oxygen species thanks to its pseudoperoxidase activity. This Scomber japonicus (Chub mackerel) protein is Myoglobin (mb).